A 500-amino-acid chain; its full sequence is Glutathione gamma-glutamylcysteinyltransferase 1 (500 aa).

Residues 1–221 (MEVASLYRRV…GFMLVSRRSS (221 aa)) form the Peptidase C83 domain. Active-site residues include cysteine 56, histidine 162, and aspartate 180.

It belongs to the phytochelatin synthase family. Expressed in roots and shoots.

The catalysed reaction is [Glu(-Cys)](n)-Gly + glutathione + H(+) = [Glu(-Cys)](n+1)-Gly + glycine. Its activity is regulated as follows. Requires cadmium for activity. Functionally, involved in the synthesis of phytochelatins (PC) and homophytochelatins (hPC), the heavy-metal-binding peptides of plants. This Triticum aestivum (Wheat) protein is Glutathione gamma-glutamylcysteinyltransferase 1 (PCS1).